The primary structure comprises 2221 residues: RNA-directed RNA polymerase L (2221 aa).

An endonuclease region spans residues lysine 29–glutamate 292. Mn(2+) contacts are provided by glutamate 54, aspartate 91, and glutamate 104. Residue lysine 117 is part of the active site. The region spanning leucine 1171 to isoleucine 1369 is the RdRp catalytic domain. Aspartate 1327 is a binding site for Mg(2+).

Belongs to the Bunyavirales RNA polymerase family. As to quaternary structure, homomultimer; the oligomeric structure is essential for the polymerase activity. Interacts with nucleoprotein N. Interacts with protein Z; this interaction inhibits viral transcription and replication, Z partially blocks the product exit tunnel for the releasing nascent RNA product. It depends on Mn(2+) as a cofactor. The cofactor is Mg(2+).

It localises to the virion. The protein resides in the host cytoplasm. It carries out the reaction RNA(n) + a ribonucleoside 5'-triphosphate = RNA(n+1) + diphosphate. Its function is as follows. RNA-dependent RNA polymerase, which is responsible for the replication and transcription of the viral RNA genome using antigenomic RNA as an intermediate. During transcription, synthesizes subgenomic RNAs and assures their capping by a cap-snatching mechanism, which involves the endonuclease activity cleaving the host capped pre-mRNAs. These short capped RNAs are then used as primers for viral transcription. The 3'-end of subgenomic mRNAs molecules are heterogeneous and not polyadenylated. The replicase function is to direct synthesis of antigenomic and genomic RNA which are encapsidated and non capped. As a consequence of the use of the same enzyme for both transcription and replication, these mechanisms need to be well coordinated. These processes may be regulated by proteins N and Z in a dose-dependent manner. Z protein inhibits the viral polymerase L und thus the viral transcription and RNA synthesis. In Sigmodon hispidus (Hispid cotton rat), this protein is RNA-directed RNA polymerase L.